Reading from the N-terminus, the 254-residue chain is MILVIDVGNTNIVLGMYDGDNLVHHWRISTDRTKTTDEYGMLVKSLFDHSNVSFEQVEGVILSSVVPPVIFPLEQMSQRYFNVRPIVVGPGVKTGLDIHVENPREVGADRIVNAVAGIAKYDGPLIIVDFGTATTYCYIDEKRRYHGGIISPGIMISVEALYQRAAKLPRIELATPPTVIGKNTIQAMQSGTYYGYVAQVDGIVNRMKREVGEATVIATGGLARLISEHAETIDHVDSFLTLEGLRLIYERNQK.

6-13 (DVGNTNIV) serves as a coordination point for ATP. Residue 107-110 (GADR) participates in substrate binding. Asp109 acts as the Proton acceptor in catalysis. Asp129 lines the K(+) pocket. Thr132 lines the ATP pocket. Residue Thr184 coordinates substrate.

It belongs to the type III pantothenate kinase family. As to quaternary structure, homodimer. NH4(+) serves as cofactor. K(+) is required as a cofactor.

Its subcellular location is the cytoplasm. It catalyses the reaction (R)-pantothenate + ATP = (R)-4'-phosphopantothenate + ADP + H(+). It participates in cofactor biosynthesis; coenzyme A biosynthesis; CoA from (R)-pantothenate: step 1/5. In terms of biological role, catalyzes the phosphorylation of pantothenate (Pan), the first step in CoA biosynthesis. The sequence is that of Type III pantothenate kinase from Exiguobacterium sp. (strain ATCC BAA-1283 / AT1b).